Reading from the N-terminus, the 322-residue chain is Elongation factor P--(R)-beta-lysine ligase (322 aa).

72–74 (SPE) contributes to the substrate binding site. Residues 96-98 (RNN) and asparagine 106 each bind ATP. Tyrosine 115 contributes to the substrate binding site. Position 241–242 (241–242 (EL)) interacts with ATP. Residue glutamate 248 coordinates substrate. Glycine 297 contacts ATP.

It belongs to the class-II aminoacyl-tRNA synthetase family. EpmA subfamily. As to quaternary structure, homodimer.

It carries out the reaction D-beta-lysine + L-lysyl-[protein] + ATP = N(6)-((3R)-3,6-diaminohexanoyl)-L-lysyl-[protein] + AMP + diphosphate + H(+). Its function is as follows. With EpmB is involved in the beta-lysylation step of the post-translational modification of translation elongation factor P (EF-P). Catalyzes the ATP-dependent activation of (R)-beta-lysine produced by EpmB, forming a lysyl-adenylate, from which the beta-lysyl moiety is then transferred to the epsilon-amino group of a conserved specific lysine residue in EF-P. This Buchnera aphidicola subsp. Baizongia pistaciae (strain Bp) protein is Elongation factor P--(R)-beta-lysine ligase.